The sequence spans 245 residues: 1-(5-phosphoribosyl)-5-[(5-phosphoribosylamino)methylideneamino] imidazole-4-carboxamide isomerase (245 aa).

Residue aspartate 8 is the Proton acceptor of the active site. The Proton donor role is filled by aspartate 131.

This sequence belongs to the HisA/HisF family.

Its subcellular location is the cytoplasm. It carries out the reaction 1-(5-phospho-beta-D-ribosyl)-5-[(5-phospho-beta-D-ribosylamino)methylideneamino]imidazole-4-carboxamide = 5-[(5-phospho-1-deoxy-D-ribulos-1-ylimino)methylamino]-1-(5-phospho-beta-D-ribosyl)imidazole-4-carboxamide. It functions in the pathway amino-acid biosynthesis; L-histidine biosynthesis; L-histidine from 5-phospho-alpha-D-ribose 1-diphosphate: step 4/9. The polypeptide is 1-(5-phosphoribosyl)-5-[(5-phosphoribosylamino)methylideneamino] imidazole-4-carboxamide isomerase (Verminephrobacter eiseniae (strain EF01-2)).